The primary structure comprises 664 residues: Putative membrane protein Bcell_0381 (664 aa).

Positions 588-616 (DVTQDENGEEKSEEDNKEEIVEENTEEDN) are enriched in acidic residues. Residues 588-622 (DVTQDENGEEKSEEDNKEEIVEENTEEDNKEEKTI) form a disordered region. Residues 636–656 (YQFLLAGIIMLVGGSCIYVFY) form a helical membrane-spanning segment.

The protein resides in the cell membrane. This Evansella cellulosilytica (strain ATCC 21833 / DSM 2522 / FERM P-1141 / JCM 9156 / N-4) (Bacillus cellulosilyticus) protein is Putative membrane protein Bcell_0381.